The chain runs to 347 residues: Putative [LysW]-L-2-aminoadipate/[LysW]-L-glutamate phosphate reductase (347 aa).

9-12 (SGYI) provides a ligand contact to NADP(+). C149 is an active-site residue. N314 provides a ligand contact to NADP(+).

This sequence belongs to the NAGSA dehydrogenase family. Type 1 subfamily. LysY sub-subfamily.

It is found in the cytoplasm. The catalysed reaction is [amino-group carrier protein]-C-terminal-N-(1-carboxy-5-oxopentan-1-yl)-L-glutamine + phosphate + NADP(+) = [amino-group carrier protein]-C-terminal-N-(1-carboxy-5-phosphooxy-5-oxopentan-1-yl)-L-glutamine + NADPH + H(+). The enzyme catalyses [amino-group carrier protein]-C-terminal-gamma-(L-glutamyl-5-semialdehyde)-L-glutamate + phosphate + NADP(+) = [amino-group carrier protein]-C-terminal-gamma-(5-phospho-L-glutamyl)-L-glutamate + NADPH + H(+). It participates in amino-acid biosynthesis; L-lysine biosynthesis via AAA pathway; L-lysine from L-alpha-aminoadipate (Thermus route): step 3/5. Its pathway is amino-acid biosynthesis; L-arginine biosynthesis. Its function is as follows. Involved in both the arginine and lysine biosynthetic pathways. This chain is Putative [LysW]-L-2-aminoadipate/[LysW]-L-glutamate phosphate reductase, found in Picrophilus torridus (strain ATCC 700027 / DSM 9790 / JCM 10055 / NBRC 100828 / KAW 2/3).